The chain runs to 254 residues: MVLDAVGNPQTVLLLGGTSEIGLAICERYLHNSAARIVLACLPDDPRREDAAAAMKQAGARSVELIDFDALDTDSHPKMIEAAFSGGDVDVAIVAFGLLGDAEELWQNQRKAVQIAEINYTAAVSVGVLLAEKMRAQGFGQIIAMSSAAGERVRRANFVYGSTKAGLDGFYLGLSEALREYGVRVLVIRPGQVRTRMSAHLKEAPLTVDKEYVANLAVTASAKGKELVWAPAAFRYVMMVLRHIPRSIFRKLPI.

D67 provides a ligand contact to NAD(+). Catalysis depends on Y160, which acts as the Proton acceptor. Position 164 (K164) interacts with NAD(+).

Belongs to the short-chain dehydrogenases/reductases (SDR) family. Interacts with DprE1 to form an epimerase complex.

It is found in the periplasm. The enzyme catalyses trans,octa-cis-decaprenylphospho-beta-D-arabinofuranose + NAD(+) = trans,octa-cis-decaprenylphospho-beta-D-erythro-pentofuranosid-2-ulose + NADH + H(+). Its pathway is cell wall biogenesis; cell wall polysaccharide biosynthesis. Component of the DprE1-DprE2 complex that catalyzes the 2-step epimerization of decaprenyl-phospho-ribose (DPR) to decaprenyl-phospho-arabinose (DPA), a key precursor that serves as the arabinose donor required for the synthesis of cell-wall arabinans. DprE1 catalyzes the first step of epimerization, namely FAD-dependent oxidation of the C2' hydroxyl of DPR to yield the keto intermediate decaprenyl-phospho-2'-keto-D-arabinose (DPX). The intermediate DPX is then transferred to DprE2 subunit of the epimerase complex, most probably through a 'substrate channel' at the interface of DprE1-DprE2 complex. DprE2 then catalyzes the second step of epimerization, the NAD(+)-dependent reduction of DPX that leads to the formation of DPA. This chain is Decaprenylphosphoryl-2-keto-beta-D-erythro-pentose reductase, found in Mycobacterium bovis (strain ATCC BAA-935 / AF2122/97).